A 550-amino-acid chain; its full sequence is NAD(P)H-quinone oxidoreductase chain 4 3 (550 aa).

The next 14 helical transmembrane spans lie at 5–25 (FPWLTAIIALPALSTLLIPLL), 36–56 (YALIVGLVDFALMCFAFWQHF), 86–106 (ISAPLVLLAGFVTTLAMFSAW), 114–134 (LFYALMLLLYSAQIGVFVAKD), 135–155 (LFLFFLMWEIELIPVYLLVCI), 168–188 (FLLYTAAASIFILVAALALSL), 212–232 (MWLYAGLLVSFGVKLAIFPLH), 243–263 (SSPVSMLLAGVLLKMGGYGLM), 277–297 (FAPLLVILGVVNIVYGAFSSF), 311–331 (VSHMGFVLIGIASFTDLGING), 332–352 (AMLQMLSHGLIASVLFFLAGV), 375–395 (VFAMFTVGALASLALPGMSGF), 418–438 (ITVFLAAVGVILTPIYLLSML), and 489–509 (IFIATCFTVLIIGVGLYPKLL).

The protein belongs to the complex I subunit 4 family.

The protein localises to the cellular thylakoid membrane. It catalyses the reaction a plastoquinone + NADH + (n+1) H(+)(in) = a plastoquinol + NAD(+) + n H(+)(out). The enzyme catalyses a plastoquinone + NADPH + (n+1) H(+)(in) = a plastoquinol + NADP(+) + n H(+)(out). NDH-1 shuttles electrons from NAD(P)H, via FMN and iron-sulfur (Fe-S) centers, to quinones in the respiratory chain. The immediate electron acceptor for the enzyme in this species is believed to be plastoquinone. Couples the redox reaction to proton translocation (for every two electrons transferred, four hydrogen ions are translocated across the cytoplasmic membrane), and thus conserves the redox energy in a proton gradient. The chain is NAD(P)H-quinone oxidoreductase chain 4 3 from Picosynechococcus sp. (strain ATCC 27264 / PCC 7002 / PR-6) (Agmenellum quadruplicatum).